Consider the following 352-residue polypeptide: Ly6/PLAUR domain-containing protein 3 (352 aa).

The first 32 residues, 1–32 (MDAARRGDTQPVMWTTRWLLLLPLLLCEGAQA), serve as a signal peptide directing secretion. The region spanning 35-128 (CYSCVQKADD…LNLTLRGLNP (94 aa)) is the UPAR/Ly6 1 domain. 4 N-linked (GlcNAc...) asparagine glycosylation sites follow: asparagine 120, asparagine 131, asparagine 178, and asparagine 185. The 83-residue stretch at 142-224 (CYSCMGLSRE…GSCCQGPRCN (83 aa)) folds into the UPAR/Ly6 2 domain. Pro residues predominate over residues 236–249 (RIPPLVLLPPPTTP). Residues 236-330 (RIPPLVLLPP…KGGAQIPSKG (95 aa)) form a disordered region. Residues 250–285 (APSTRTQNSSSTTSTTAPTTATTTIKPTTVQASHTS) are compositionally biased toward low complexity. 2 stretches are compositionally biased toward basic and acidic residues: residues 286-300 (STHE…EEGS) and 309-320 (HQDRSNMGKFPE). A lipid anchor (GPI-anchor amidated glycine) is attached at glycine 330. The propeptide at 331-352 (GSDALGSWLSAILLTVVAGAML) is removed in mature form.

Interacts with AGR2 and AGR3. Binds laminin-1 and laminin-5. Interacts with LGALS3. In terms of tissue distribution, found predominantly on the basal layers of squamous epithelium. Expressed in the gravid uterus and on epithelial of the upper gastrointestinal tract. It has been found in tumor lines which metastasize via the lymphatic system.

The protein localises to the cell membrane. Functionally, supports cell migration. May be involved in tumor progression. The polypeptide is Ly6/PLAUR domain-containing protein 3 (Lypd3) (Rattus norvegicus (Rat)).